A 1075-amino-acid chain; its full sequence is DNA-directed RNA polymerase subunit beta (1075 aa).

Belongs to the RNA polymerase beta chain family. In plastids the minimal PEP RNA polymerase catalytic core is composed of four subunits: alpha, beta, beta', and beta''. When a (nuclear-encoded) sigma factor is associated with the core the holoenzyme is formed, which can initiate transcription.

It localises to the plastid. It is found in the chloroplast. It catalyses the reaction RNA(n) + a ribonucleoside 5'-triphosphate = RNA(n+1) + diphosphate. Its function is as follows. DNA-dependent RNA polymerase catalyzes the transcription of DNA into RNA using the four ribonucleoside triphosphates as substrates. The sequence is that of DNA-directed RNA polymerase subunit beta from Saccharum officinarum (Sugarcane).